Here is a 252-residue protein sequence, read N- to C-terminus: 2-succinyl-6-hydroxy-2,4-cyclohexadiene-1-carboxylate synthase (252 aa).

Belongs to the AB hydrolase superfamily. MenH family. In terms of assembly, monomer.

The enzyme catalyses 5-enolpyruvoyl-6-hydroxy-2-succinyl-cyclohex-3-ene-1-carboxylate = (1R,6R)-6-hydroxy-2-succinyl-cyclohexa-2,4-diene-1-carboxylate + pyruvate. Its pathway is quinol/quinone metabolism; 1,4-dihydroxy-2-naphthoate biosynthesis; 1,4-dihydroxy-2-naphthoate from chorismate: step 3/7. It participates in quinol/quinone metabolism; menaquinone biosynthesis. Its function is as follows. Catalyzes a proton abstraction reaction that results in 2,5-elimination of pyruvate from 2-succinyl-5-enolpyruvyl-6-hydroxy-3-cyclohexene-1-carboxylate (SEPHCHC) and the formation of 2-succinyl-6-hydroxy-2,4-cyclohexadiene-1-carboxylate (SHCHC). The sequence is that of 2-succinyl-6-hydroxy-2,4-cyclohexadiene-1-carboxylate synthase from Salmonella schwarzengrund (strain CVM19633).